The sequence spans 738 residues: Sporulation kinase E (738 aa).

4 consecutive PAS domains span residues E29–G99, N150–G220, S271–I342, and S391–M462. In terms of domain architecture, Histidine kinase spans G523 to Q729. H526 is modified (phosphohistidine; by autocatalysis).

The catalysed reaction is ATP + protein L-histidine = ADP + protein N-phospho-L-histidine.. Phosphorylates the sporulation-regulatory protein spo0A under biofilm growth conditions. Also able to weakly phosphorylate spo0F. The chain is Sporulation kinase E (kinE) from Bacillus subtilis (strain 168).